A 405-amino-acid polypeptide reads, in one-letter code: CMP-sialic acid transporter 3 (405 aa).

At 1–39 (MKNGIAECPACHSKLVSPGSKTISRAYDDHKIRVSSKQR) the chain is on the cytoplasmic side. Residues 40 to 60 (VLNVLLVVGDCMLVGLQPVLV) traverse the membrane as a helical segment. Residues 61-73 (YMSKVDGKFNFSP) lie on the Lumenal side of the membrane. Residues 74-94 (ISVNFLTEIAKVIFAIVMLLI) form a helical membrane-spanning segment. Residues 95 to 142 (QARHQKVGEKPLLSVSTFVQAARNNVLLAVPALLYAINNYLKFTMQLY) lie on the Cytoplasmic side of the membrane. Residues 143–163 (FNPATVKMLSNLKVLVIAVLL) traverse the membrane as a helical segment. Residues 164 to 170 (KMVMKRR) are Lumenal-facing. A helical transmembrane segment spans residues 171 to 191 (FSIIQWEALALLLIGISVNQL). Residues 192–199 (RSLPEGAT) are Cytoplasmic-facing. The helical transmembrane segment at 200 to 220 (AIGIPLATGAYVCTVIFVTVP) threads the bilayer. Topologically, residues 221 to 243 (SMASVFNEYALKSQYDTSIYLQN) are lumenal. The helical transmembrane segment at 244-264 (LFLYGYGAIFNFLGILGTVIY) threads the bilayer. The Cytoplasmic segment spans residues 265–280 (KGPGSFDILQGHSRAT). The chain crosses the membrane as a helical span at residues 281–301 (MFLILNNAAQGILSSFFFKYA). Residues 302-321 (DTILKKYSSTVATIFTGIAS) are Lumenal-facing. Residues 322–342 (AALFGHVITMNFLLGISIVFI) traverse the membrane as a helical segment. The Cytoplasmic portion of the chain corresponds to 343–405 (SMHQFFSPLA…SDDRTPLLPR (63 aa)). The segment at 385-405 (GANEEASHRGESDDRTPLLPR) is disordered. A compositionally biased stretch (basic and acidic residues) spans 389–405 (EASHRGESDDRTPLLPR).

Belongs to the nucleotide-sugar transporter family. CMP-Sialate:CMP antiporter (TC 2.A.7.12) subfamily.

The protein resides in the golgi apparatus membrane. In terms of biological role, sugar transporter involved in the transport of CMP-sialic acid from the cytoplasm into the Golgi. The chain is CMP-sialic acid transporter 3 (UTR6) from Arabidopsis thaliana (Mouse-ear cress).